We begin with the raw amino-acid sequence, 190 residues long: Crossover junction endodeoxyribonuclease RuvC (190 aa).

Catalysis depends on residues Asp-8, Glu-67, and Asp-139. Residues Asp-8, Glu-67, and Asp-139 each coordinate Mg(2+).

The protein belongs to the RuvC family. Homodimer which binds Holliday junction (HJ) DNA. The HJ becomes 2-fold symmetrical on binding to RuvC with unstacked arms; it has a different conformation from HJ DNA in complex with RuvA. In the full resolvosome a probable DNA-RuvA(4)-RuvB(12)-RuvC(2) complex forms which resolves the HJ. It depends on Mg(2+) as a cofactor.

The protein localises to the cytoplasm. The enzyme catalyses Endonucleolytic cleavage at a junction such as a reciprocal single-stranded crossover between two homologous DNA duplexes (Holliday junction).. The RuvA-RuvB-RuvC complex processes Holliday junction (HJ) DNA during genetic recombination and DNA repair. Endonuclease that resolves HJ intermediates. Cleaves cruciform DNA by making single-stranded nicks across the HJ at symmetrical positions within the homologous arms, yielding a 5'-phosphate and a 3'-hydroxyl group; requires a central core of homology in the junction. The consensus cleavage sequence is 5'-(A/T)TT(C/G)-3'. Cleavage occurs on the 3'-side of the TT dinucleotide at the point of strand exchange. HJ branch migration catalyzed by RuvA-RuvB allows RuvC to scan DNA until it finds its consensus sequence, where it cleaves and resolves the cruciform DNA. This chain is Crossover junction endodeoxyribonuclease RuvC, found in Haemophilus influenzae (strain PittEE).